Reading from the N-terminus, the 471-residue chain is Maintenance of mitochondrial morphology protein 1 (471 aa).

At 1-21 the chain is on the lumenal side; it reads MSSPQNTSCPPSQHSLSFTQG. A helical transmembrane segment spans residues 22–42; it reads LLLGQLSVVLLIGAFIKFFIF. At 43–471 the chain is on the cytoplasmic side; the sequence is GESPSSSSRG…GSLPGAPAVA (429 aa). In terms of domain architecture, SMP-LTD spans 128-370; the sequence is QPESLDWFNV…EPRVQLVALP (243 aa). 3 disordered regions span residues 271–306, 395–415, and 448–471; these read GTTE…GVRS, EDPA…NRDG, and RGDT…PAVA. The segment covering 280-295 has biased composition (basic and acidic residues); sequence PHPENQNESKPSRQDP. Over residues 401 to 410 the composition is skewed to polar residues; that stretch reads ATHSGFTPVN.

Belongs to the MMM1 family. Homodimer. Component of the ER-mitochondria encounter structure (ERMES) or MDM complex, composed of MMM1, MDM10, MDM12 and MDM34. An MMM1 homodimer associates with one molecule of MDM12 on each side in a pairwise head-to-tail manner, and the SMP-LTD domains of MMM1 and MDM12 generate a continuous hydrophobic tunnel for phospholipid trafficking.

Its subcellular location is the endoplasmic reticulum membrane. Functionally, component of the ERMES/MDM complex, which serves as a molecular tether to connect the endoplasmic reticulum (ER) and mitochondria. Components of this complex are involved in the control of mitochondrial shape and protein biogenesis, and function in nonvesicular lipid trafficking between the ER and mitochondria. The MDM12-MMM1 subcomplex functions in the major beta-barrel assembly pathway that is responsible for biogenesis of all outer membrane beta-barrel proteins, and acts in a late step after the SAM complex. The MDM10-MDM12-MMM1 subcomplex further acts in the TOM40-specific pathway after the action of the MDM12-MMM1 complex. Essential for establishing and maintaining the structure of mitochondria and maintenance of mtDNA nucleoids. In Arthroderma otae (strain ATCC MYA-4605 / CBS 113480) (Microsporum canis), this protein is Maintenance of mitochondrial morphology protein 1.